The sequence spans 362 residues: UDP-N-acetylglucosamine--N-acetylmuramyl-(pentapeptide) pyrophosphoryl-undecaprenol N-acetylglucosamine transferase (362 aa).

UDP-N-acetyl-alpha-D-glucosamine is bound by residues 15–17 (TGG), Asn-127, Arg-165, Ser-191, Ile-247, 266–271 (ALTVSE), and Gln-292.

It belongs to the glycosyltransferase 28 family. MurG subfamily.

It localises to the cell inner membrane. The enzyme catalyses di-trans,octa-cis-undecaprenyl diphospho-N-acetyl-alpha-D-muramoyl-L-alanyl-D-glutamyl-meso-2,6-diaminopimeloyl-D-alanyl-D-alanine + UDP-N-acetyl-alpha-D-glucosamine = di-trans,octa-cis-undecaprenyl diphospho-[N-acetyl-alpha-D-glucosaminyl-(1-&gt;4)]-N-acetyl-alpha-D-muramoyl-L-alanyl-D-glutamyl-meso-2,6-diaminopimeloyl-D-alanyl-D-alanine + UDP + H(+). It functions in the pathway cell wall biogenesis; peptidoglycan biosynthesis. In terms of biological role, cell wall formation. Catalyzes the transfer of a GlcNAc subunit on undecaprenyl-pyrophosphoryl-MurNAc-pentapeptide (lipid intermediate I) to form undecaprenyl-pyrophosphoryl-MurNAc-(pentapeptide)GlcNAc (lipid intermediate II). The sequence is that of UDP-N-acetylglucosamine--N-acetylmuramyl-(pentapeptide) pyrophosphoryl-undecaprenol N-acetylglucosamine transferase from Shewanella baltica (strain OS223).